A 232-amino-acid polypeptide reads, in one-letter code: Large ribosomal subunit protein uL1 (232 aa).

This sequence belongs to the universal ribosomal protein uL1 family. As to quaternary structure, part of the 50S ribosomal subunit.

Binds directly to 23S rRNA. The L1 stalk is quite mobile in the ribosome, and is involved in E site tRNA release. Its function is as follows. Protein L1 is also a translational repressor protein, it controls the translation of the L11 operon by binding to its mRNA. The polypeptide is Large ribosomal subunit protein uL1 (Ruegeria pomeroyi (strain ATCC 700808 / DSM 15171 / DSS-3) (Silicibacter pomeroyi)).